A 373-amino-acid polypeptide reads, in one-letter code: uncharacterized protein (373 aa).

This is an uncharacterized protein from Methanocaldococcus jannaschii (strain ATCC 43067 / DSM 2661 / JAL-1 / JCM 10045 / NBRC 100440) (Methanococcus jannaschii).